We begin with the raw amino-acid sequence, 667 residues long: MAIVQTLPVPLEPAPEAATAQQAPAMGSVSSLISGRPCPGGPAPPRHHGPPGPTFFRQQDGLLRGGYEAQEPLCPAVPPRKAVPGTNFTYINEDFRTESPPSPSSDLEDAREQRARNAHLRGPPPKLIPVSGKLEKNMEKIVIRPTAFKPVLPKPRGVPSLPSFLGPRATGPSGSQGSLTQLFGGPASSSSSSSSSAADKPLILSGWASGCPSGTLSDSGRNSLSSLPTYSTGGAEPATNSPGGHLPSHGPGRGALPGPARGAPTGPSHSDSGRSSSSKSTGSLGGRLAGGLLGSGPRASPDSSSCGERSPPPPPPPPPPSDEALLHCVLEGKLRDREAELQQLRDSLDESEVTMCQVYEERQRHWPREREALREDGVARAQRAQQLLQLQVFQLQQEKRQLQDDFAQLLQEREQLERRCAAFEREQRELGPRLEETKWEVCQKSGEISLLKQQLKESQSELVQKGSELVALRVALREARAALRVSEGRARGLQEAARTRELELEACSQELQRHRQEAERLREKAGQLDSEAAGLREPPVPPATADPFLLAESDEAKAQRAAAGVGGSLRAQVERLRAELQRERRQGEEQRDSFEGERLAWQAEKEQVIRYQKQLQHNYIQMYRRNRQLEQELQQLSLELEARELADLGLAEPAPCICLEEITATEI.

The segment covering 1-25 (MAIVQTLPVPLEPAPEAATAQQAPA) has biased composition (low complexity). 3 disordered regions span residues 1-132 (MAIV…PVSG), 150-325 (PVLP…DEAL), and 516-541 (QEAE…PPVP). Residues 1–333 (MAIVQTLPVP…ALLHCVLEGK (333 aa)) form a required for centrosomal localization region. Residues 172-181 (PSGSQGSLTQ) are compositionally biased toward polar residues. The segment covering 187 to 198 (ASSSSSSSSSAA) has biased composition (low complexity). The span at 212 to 232 (PSGTLSDSGRNSLSSLPTYST) shows a compositional bias: polar residues. The segment covering 241–282 (SPGGHLPSHGPGRGALPGPARGAPTGPSHSDSGRSSSSKSTG) has biased composition (low complexity). Residue S248 is modified to Phosphoserine. A compositionally biased stretch (gly residues) spans 283 to 294 (SLGGRLAGGLLG). S295 carries the phosphoserine modification. Pro residues predominate over residues 310-321 (SPPPPPPPPPPS). A coiled-coil region spans residues 329–647 (VLEGKLRDRE…LELEARELAD (319 aa)). The tract at residues 445–667 (SGEISLLKQQ…CLEEITATEI (223 aa)) is sufficient for interaction with CTNNB1. Positions 448–667 (ISLLKQQLKE…CLEEITATEI (220 aa)) are sufficient for interaction with KATNB1 and for inhibition of katanin-mediated microtubule severing. A compositionally biased stretch (basic and acidic residues) spans 516 to 526 (QEAERLREKAG). Position 568 is a phosphoserine (S568). Residues 629–638 (LEQELQQLSL) carry the Nuclear export signal motif.

Belongs to the LZTS2 family. As to quaternary structure, interacts with KATNB1. Also interacts with CTNNB1, gamma-tubulin and KIF23.

The protein localises to the cytoplasm. It is found in the cytoskeleton. It localises to the microtubule organizing center. Its subcellular location is the centrosome. Its function is as follows. Negative regulator of katanin-mediated microtubule severing and release from the centrosome. Required for central spindle formation and the completion of cytokinesis. May negatively regulate axonal outgrowth by preventing the formation of microtubule bundles that are necessary for transport within the elongating axon. Negative regulator of the Wnt signaling pathway. Represses beta-catenin-mediated transcriptional activation by promoting the nuclear exclusion of beta-catenin. The polypeptide is Leucine zipper putative tumor suppressor 2 (Bos taurus (Bovine)).